The primary structure comprises 331 residues: MEPIRNLAENLRAVLGRLRDGEPRKGDMFNGQHFWETLGHSIKATSQEATKLSLAFTKPPLPSEEGSQKLCDGLLNAILAAATVYYSLPKEQGITLRKTVREAIADVIEGTIQLVEVILSSRIQSLSQAQLVSTGSVWEACDQWEKLPKDNLAAVQVIVSGYLDVVKDAIEEVEQAQTDGEDPFSDIPEDDEIGARGNQDTYWSEADRRLMAPCLGLMKASKACLKKVIGAIKAHGKADTAEHVAQLDDLVDVTQEVSPSVDELALSMYPPMNHATVRLNAAKLSSVLKKVLAITRSSHVCPEAESTWIQFLDSAVDHNMQKTKNLTQGAL.

Over residues 175 to 192 the composition is skewed to acidic residues; that stretch reads QAQTDGEDPFSDIPEDDE. Positions 175 to 197 are disordered; the sequence is QAQTDGEDPFSDIPEDDEIGARG.

This sequence belongs to the CCNDBP1 family.

It is found in the cytoplasm. It localises to the nucleus. In terms of biological role, may negatively regulate cell cycle progression. This is Cyclin-D1-binding protein 1 homolog (ccndbp1) from Xenopus laevis (African clawed frog).